Here is a 540-residue protein sequence, read N- to C-terminus: CWF19-like protein 1 (540 aa).

Positions 265–326 (ENPYRKSDKD…AKQPRKHPQP (62 aa)) are disordered. Residues 267 to 277 (PYRKSDKDTPK) show a composition bias toward basic and acidic residues.

Belongs to the CWF19 family.

The sequence is that of CWF19-like protein 1 (cwf19l1) from Xenopus laevis (African clawed frog).